The primary structure comprises 134 residues: D-ribose pyranase (134 aa).

The active-site Proton donor is the histidine 20. Substrate is bound by residues aspartate 28, histidine 99, and 123 to 125; that span reads YSN.

It belongs to the RbsD / FucU family. RbsD subfamily. In terms of assembly, homodecamer.

The protein localises to the cytoplasm. It carries out the reaction beta-D-ribopyranose = beta-D-ribofuranose. It functions in the pathway carbohydrate metabolism; D-ribose degradation; D-ribose 5-phosphate from beta-D-ribopyranose: step 1/2. Functionally, catalyzes the interconversion of beta-pyran and beta-furan forms of D-ribose. The sequence is that of D-ribose pyranase from Staphylococcus aureus (strain Mu3 / ATCC 700698).